The following is a 141-amino-acid chain: Small ribosomal subunit protein eS17z (141 aa).

It belongs to the eukaryotic ribosomal protein eS17 family.

The protein is Small ribosomal subunit protein eS17z (RPS17A) of Arabidopsis thaliana (Mouse-ear cress).